The chain runs to 531 residues: Cytosolic Fe-S cluster assembly factor NAR1 (531 aa).

Residues Cys20, Cys72, Cys75, Cys78, Cys184, and Cys239 each contribute to the [4Fe-4S] cluster site. Positions 395–426 are disordered; sequence TSSTTTTKTNPLVARRKARLSSKRSESGAQDV. The [4Fe-4S] cluster site is built by Cys442 and Cys446.

It belongs to the NARF family.

Functionally, component of the cytosolic Fe/S protein assembly machinery. Required for maturation of extramitochondrial Fe/S proteins. May play a role in the transfer of pre-assembled Fe/S clusters to target apoproteins. The polypeptide is Cytosolic Fe-S cluster assembly factor NAR1 (NAR1) (Meyerozyma guilliermondii (strain ATCC 6260 / CBS 566 / DSM 6381 / JCM 1539 / NBRC 10279 / NRRL Y-324) (Yeast)).